A 294-amino-acid chain; its full sequence is MHNIFKGLITALITPFKDNKLDLYALERIVKHQIKHEVDAILIAGSTGESSSLSFEEYKLLLQTSVEIVNKCIPIISGCSSNNTTYARALAAESTKIGVDGFMASPPSYVKPTQHGIYKHFEALHEACNLPIMLYSAPTRSGVDFSDETILRLSKLPRILALKDCGVDLERPLRIRATVKKDFNILTGNDEVVLAFNAQGGVGWTSVASNIVPNICKELLEKWNKNDTKGALEIHQKLLPLYTALFVESNPIPIKYAAHYLGLCENEIRPPLTEASDSAKKQIENIITSLSIKI.

T47 provides a ligand contact to pyruvate. Residue Y135 is the Proton donor/acceptor of the active site. The active-site Schiff-base intermediate with substrate is K163. T205 contributes to the pyruvate binding site.

It belongs to the DapA family. Homotetramer; dimer of dimers.

It localises to the cytoplasm. The enzyme catalyses L-aspartate 4-semialdehyde + pyruvate = (2S,4S)-4-hydroxy-2,3,4,5-tetrahydrodipicolinate + H2O + H(+). It functions in the pathway amino-acid biosynthesis; L-lysine biosynthesis via DAP pathway; (S)-tetrahydrodipicolinate from L-aspartate: step 3/4. Functionally, catalyzes the condensation of (S)-aspartate-beta-semialdehyde [(S)-ASA] and pyruvate to 4-hydroxy-tetrahydrodipicolinate (HTPA). The chain is 4-hydroxy-tetrahydrodipicolinate synthase from Rickettsia rickettsii.